A 127-amino-acid chain; its full sequence is Large ribosomal subunit protein bL17 (127 aa).

It belongs to the bacterial ribosomal protein bL17 family. As to quaternary structure, part of the 50S ribosomal subunit. Contacts protein L32.

In Lactiplantibacillus plantarum (strain ATCC BAA-793 / NCIMB 8826 / WCFS1) (Lactobacillus plantarum), this protein is Large ribosomal subunit protein bL17.